The sequence spans 204 residues: Octanoyltransferase (204 aa).

The BPL/LPL catalytic domain maps to 27–202 (QGGEEALLLL…RFQPLLNLHL (176 aa)). Substrate is bound by residues 65 to 72 (RGGDVTYH), 132 to 134 (SIG), and 145 to 147 (GFA). Residue cysteine 163 is the Acyl-thioester intermediate of the active site.

The protein belongs to the LipB family.

The protein localises to the cytoplasm. It carries out the reaction octanoyl-[ACP] + L-lysyl-[protein] = N(6)-octanoyl-L-lysyl-[protein] + holo-[ACP] + H(+). The protein operates within protein modification; protein lipoylation via endogenous pathway; protein N(6)-(lipoyl)lysine from octanoyl-[acyl-carrier-protein]: step 1/2. In terms of biological role, catalyzes the transfer of endogenously produced octanoic acid from octanoyl-acyl-carrier-protein onto the lipoyl domains of lipoate-dependent enzymes. Lipoyl-ACP can also act as a substrate although octanoyl-ACP is likely to be the physiological substrate. The chain is Octanoyltransferase from Citrifermentans bemidjiense (strain ATCC BAA-1014 / DSM 16622 / JCM 12645 / Bem) (Geobacter bemidjiensis).